The following is a 35-amino-acid chain: Cupiennin-1d (35 aa).

Residue Glu35 is modified to Glutamic acid 1-amide.

It belongs to the cationic peptide 04 (cupiennin) family. 01 subfamily. In terms of tissue distribution, expressed by the venom gland.

The protein resides in the secreted. Functionally, has antimicrobial activity against B.subtilis, E.coli, E.faecalis, P.aeruginosa, and S.aureus. Has insecticidal and hemolytic activities. Probably acts by disturbing membrane function with its amphipathic structure. This Cupiennius salei (American wandering spider) protein is Cupiennin-1d.